We begin with the raw amino-acid sequence, 464 residues long: Sensor protein IrlS (464 aa).

Topologically, residues 1–13 (MIRRLLPRTLRAR) are periplasmic. A helical membrane pass occupies residues 14–34 (LTALIILSTAATLALSGVALY). At 35–166 (SALHNRLVGM…DHALLRAYAY (132 aa)) the chain is on the cytoplasmic side. Residues 167–187 (TVVVIEVLAVVLTAALAYGIA) traverse the membrane as a helical segment. The HAMP domain maps to 188–241 (MLGLSPLRRLVARAEQMSSSRLAQPLPELDTSGELKEMEHAFNAMLKRLDESFV). The Periplasmic segment spans residues 188 to 464 (MLGLSPLRRL…FWLKFPAHAA (277 aa)). The Histidine kinase domain occupies 249 to 463 (NLAHDMRTPL…TFWLKFPAHA (215 aa)). The residue at position 252 (histidine 252) is a Phosphohistidine; by autocatalysis.

It is found in the cell inner membrane. The catalysed reaction is ATP + protein L-histidine = ADP + protein N-phospho-L-histidine.. Functionally, member of the two-component regulatory system IrlR/IrlS. May be involved in invasion of eukaryotic cells and heavy-metal resistance. Probably activates IrlR by phosphorylation. This is Sensor protein IrlS (irlS) from Burkholderia pseudomallei (strain K96243).